We begin with the raw amino-acid sequence, 1162 residues long: Spike glycoprotein (1162 aa).

Positions 1–18 (MLVTPLLLVTLLCALCSA) are cleaved as a signal peptide. Topologically, residues 19–1095 (ALYDSSSYVY…LKTYIKWPWY (1077 aa)) are extracellular. N-linked (GlcNAc...) asparagine; by host glycosylation is found at asparagine 51, asparagine 77, asparagine 103, asparagine 144, asparagine 163, asparagine 178, asparagine 212, asparagine 237, asparagine 247, asparagine 264, asparagine 271, asparagine 276, asparagine 306, asparagine 425, asparagine 447, asparagine 513, asparagine 530, asparagine 579, asparagine 591, asparagine 669, asparagine 676, and asparagine 714. Positions 769–874 (IPFATQLQAR…QVDRLITGRL (106 aa)) are heptad repeat 1 (HR1). Residues 822-866 (QDVVNKQSAILTETMASLNKNFGAISSVIQEIYLQLDAIQANAQV) are a coiled coil. 7 N-linked (GlcNAc...) asparagine; by host glycosylation sites follow: asparagine 947, asparagine 960, asparagine 979, asparagine 1014, asparagine 1051, asparagine 1058, and asparagine 1074. Residues 1024 to 1105 (NDDFDFDDEL…VWLAIAFATI (82 aa)) form a heptad repeat 2 (HR2) region. Residues 1055-1083 (PVLNITYDIDKIEEVIKGLNDSLIDLETL) are a coiled coil. The chain crosses the membrane as a helical span at residues 1096–1116 (VWLAIAFATIIFILILGWVFF). Topologically, residues 1117-1162 (MTGCCGCCCGCFGIIPLMSKCGKKSSYYTTFDNDVVTEQYRPKKSV) are cytoplasmic. Positions 1159 to 1162 (KKSV) match the Di-lysine motif motif.

It belongs to the gammacoronaviruses spike protein family. Homotrimer; each monomer consists of a S1 and a S2 subunit. The resulting peplomers protrude from the virus surface as spikes. In terms of processing, specific enzymatic cleavages in vivo yield mature proteins. The precursor is processed into S1 and S2 by host cell furin or furin-like protease to yield the mature S1 and S2 proteins. The cleavage site between S1 and S2 requires the optimal sequence [KR]-X-[KR]-R. Additionally, a second cleavage leads to the release of a fusion peptide after viral attachment to host cell receptor.

The protein localises to the virion membrane. The protein resides in the host endoplasmic reticulum-Golgi intermediate compartment membrane. Functionally, attaches the virion to the host cell membrane by interacting with sialic acids, initiating the infection. Mediates fusion of the virion and cellular membranes by acting as a class I viral fusion protein. Under the current model, the protein has at least 3 conformational states: pre-fusion native state, pre-hairpin intermediate state, and post-fusion hairpin state. During viral and target cell membrane fusion, the coiled coil regions (heptad repeats) assume a trimer-of-hairpins structure, positioning the fusion peptide in close proximity to the C-terminal region of the ectodomain. The formation of this structure appears to drive apposition and subsequent fusion of viral and target cell membranes. Its function is as follows. Acts as a viral fusion peptide after S2 cleavage occurring upon virus endocytosis. The protein is Spike glycoprotein of Avian infectious bronchitis virus (strain KB8523) (IBV).